The primary structure comprises 319 residues: Phosphoenolpyruvate transferase (319 aa).

7,8-didemethyl-8-hydroxy-5-deazariboflavin is bound at residue D50.

Belongs to the CofD family. In terms of assembly, homodimer. Mg(2+) serves as cofactor.

The catalysed reaction is enolpyruvoyl-2-diphospho-5'-guanosine + 7,8-didemethyl-8-hydroxy-5-deazariboflavin = dehydro coenzyme F420-0 + GMP + H(+). It functions in the pathway cofactor biosynthesis; coenzyme F420 biosynthesis. Its function is as follows. Catalyzes the transfer of the phosphoenolpyruvate moiety from enoylpyruvoyl-2-diphospho-5'-guanosine (EPPG) to 7,8-didemethyl-8-hydroxy-5-deazariboflavin (FO) with the formation of dehydro coenzyme F420-0 and GMP. The protein is Phosphoenolpyruvate transferase of Streptomyces avermitilis (strain ATCC 31267 / DSM 46492 / JCM 5070 / NBRC 14893 / NCIMB 12804 / NRRL 8165 / MA-4680).